Here is a 376-residue protein sequence, read N- to C-terminus: Succinyl-diaminopimelate desuccinylase (376 aa).

Residue His67 participates in Zn(2+) binding. Residue Asp69 is part of the active site. Zn(2+) is bound at residue Asp100. Residue Glu134 is the Proton acceptor of the active site. Zn(2+)-binding residues include Glu135, Glu163, and His349.

Belongs to the peptidase M20A family. DapE subfamily. Homodimer. Zn(2+) serves as cofactor. The cofactor is Co(2+).

The enzyme catalyses N-succinyl-(2S,6S)-2,6-diaminopimelate + H2O = (2S,6S)-2,6-diaminopimelate + succinate. It functions in the pathway amino-acid biosynthesis; L-lysine biosynthesis via DAP pathway; LL-2,6-diaminopimelate from (S)-tetrahydrodipicolinate (succinylase route): step 3/3. Functionally, catalyzes the hydrolysis of N-succinyl-L,L-diaminopimelic acid (SDAP), forming succinate and LL-2,6-diaminopimelate (DAP), an intermediate involved in the bacterial biosynthesis of lysine and meso-diaminopimelic acid, an essential component of bacterial cell walls. The chain is Succinyl-diaminopimelate desuccinylase from Pseudoalteromonas translucida (strain TAC 125).